Here is a 503-residue protein sequence, read N- to C-terminus: ATP synthase subunit alpha (503 aa).

Residue 170–177 coordinates ATP; sequence GDRQTGKT.

This sequence belongs to the ATPase alpha/beta chains family. As to quaternary structure, F-type ATPases have 2 components, CF(1) - the catalytic core - and CF(0) - the membrane proton channel. CF(1) has five subunits: alpha(3), beta(3), gamma(1), delta(1), epsilon(1). CF(0) has three main subunits: a(1), b(2) and c(9-12). The alpha and beta chains form an alternating ring which encloses part of the gamma chain. CF(1) is attached to CF(0) by a central stalk formed by the gamma and epsilon chains, while a peripheral stalk is formed by the delta and b chains.

Its subcellular location is the cell inner membrane. It catalyses the reaction ATP + H2O + 4 H(+)(in) = ADP + phosphate + 5 H(+)(out). Functionally, produces ATP from ADP in the presence of a proton gradient across the membrane. The alpha chain is a regulatory subunit. This chain is ATP synthase subunit alpha, found in Thermotoga neapolitana (strain ATCC 49049 / DSM 4359 / NBRC 107923 / NS-E).